Reading from the N-terminus, the 95-residue chain is Defensin-1 (95 aa).

Positions 1-19 (MKIYFIVGLLFMAMVAIMA) are cleaved as a signal peptide. Positions 20 to 43 (APVEDEFEPLEHFENEERADRHRR) are excised as a propeptide. 3 cysteine pairs are disulfide-bonded: Cys-46–Cys-74, Cys-60–Cys-79, and Cys-64–Cys-81. Phe-94 carries the phenylalanine amide modification.

The protein localises to the secreted. In terms of biological role, found in royal jelly and in hemolymph, potent antibacterial protein against Gram-positive bacteria at low concentration. The protein is Defensin-1 of Apis mellifera carnica (Carniolan honeybee).